A 238-amino-acid polypeptide reads, in one-letter code: Sugar fermentation stimulation protein homolog (238 aa).

This sequence belongs to the SfsA family.

The protein is Sugar fermentation stimulation protein homolog of Pseudoalteromonas translucida (strain TAC 125).